The primary structure comprises 76 residues: U-scoloptoxin(13)-Sm1a (76 aa).

A signal peptide spans 1–22 (MAYICAXTLAFLLCVNTGIIQA).

It belongs to the scoloptoxin-13 family. Post-translationally, contains 4 disulfide bonds. In terms of tissue distribution, expressed by the venom gland.

Its subcellular location is the secreted. This chain is U-scoloptoxin(13)-Sm1a, found in Scolopendra morsitans (Tanzanian blue ringleg centipede).